The chain runs to 237 residues: Phosphoribosylaminoimidazole-succinocarboxamide synthase (237 aa).

The protein belongs to the SAICAR synthetase family.

It catalyses the reaction 5-amino-1-(5-phospho-D-ribosyl)imidazole-4-carboxylate + L-aspartate + ATP = (2S)-2-[5-amino-1-(5-phospho-beta-D-ribosyl)imidazole-4-carboxamido]succinate + ADP + phosphate + 2 H(+). The protein operates within purine metabolism; IMP biosynthesis via de novo pathway; 5-amino-1-(5-phospho-D-ribosyl)imidazole-4-carboxamide from 5-amino-1-(5-phospho-D-ribosyl)imidazole-4-carboxylate: step 1/2. This Shigella boydii serotype 4 (strain Sb227) protein is Phosphoribosylaminoimidazole-succinocarboxamide synthase.